We begin with the raw amino-acid sequence, 723 residues long: Polyribonucleotide nucleotidyltransferase (723 aa).

Mg(2+)-binding residues include Asp-488 and Asp-494. The KH domain maps to 555–614 (PKIITLNIKPEKIKDVIGPGGKQINAIIDETGVKIDIEQDGTVYIASQDQAMNRKAIAII). One can recognise an S1 motif domain in the interval 624 to 692 (GEVYTGKVRR…QQGRVNLSRK (69 aa)). Residues 692–723 (KALLEKKEQPEGDKKPQAEKKFYPKTKKPESK) are disordered. Residues 693–723 (ALLEKKEQPEGDKKPQAEKKFYPKTKKPESK) are compositionally biased toward basic and acidic residues.

It belongs to the polyribonucleotide nucleotidyltransferase family. It depends on Mg(2+) as a cofactor.

It localises to the cytoplasm. It carries out the reaction RNA(n+1) + phosphate = RNA(n) + a ribonucleoside 5'-diphosphate. Its function is as follows. Involved in mRNA degradation. Catalyzes the phosphorolysis of single-stranded polyribonucleotides processively in the 3'- to 5'-direction. In Listeria monocytogenes serotype 4a (strain HCC23), this protein is Polyribonucleotide nucleotidyltransferase.